We begin with the raw amino-acid sequence, 2430 residues long: Transcription factor HIVEP2 (2430 aa).

A disordered region spans residues methionine 1–proline 127. Polar residues-rich tracts occupy residues lysine 11–valine 22 and histidine 96–threonine 110. 2 C2H2-type zinc fingers span residues tyrosine 189–histidine 211 and tyrosine 217–histidine 239. Disordered regions lie at residues isoleucine 271–proline 302, serine 374–alanine 418, and alanine 744–histidine 995. The segment covering serine 381–alanine 418 has biased composition (polar residues). Composition is skewed to basic and acidic residues over residues alanine 744–proline 753 and aspartate 775–lysine 784. The span at serine 792 to asparagine 804 shows a compositional bias: polar residues. Phosphoserine is present on serine 811. A compositionally biased stretch (polar residues) spans serine 853–glutamine 863. The segment covering arginine 884–glutamate 908 has biased composition (basic and acidic residues). The short motif at proline 929 to arginine 935 is the Nuclear localization signal element. 5 positions are modified to phosphoserine: serine 942, serine 947, serine 1040, serine 1431, and serine 1435. The span at glycine 944 to serine 974 shows a compositional bias: low complexity. Positions lysine 1472–alanine 1584 are disordered. Low complexity-rich tracts occupy residues serine 1499–glycine 1520 and serine 1560–serine 1569. 2 consecutive C2H2-type zinc fingers follow at residues tyrosine 1783 to histidine 1805 and tyrosine 1811 to histidine 1835. 2 disordered regions span residues serine 1848–proline 1931 and phenylalanine 1986–arginine 2117. The segment covering aspartate 1850–methionine 1860 has biased composition (acidic residues). Positions glutamate 1861–serine 1871 are enriched in basic and acidic residues. Acidic residues predominate over residues aspartate 1883–glycine 1909. The segment covering threonine 1991–aspartate 2001 has biased composition (basic and acidic residues). Low complexity predominate over residues serine 2013–serine 2037. 10 consecutive repeat copies span residues serine 2037 to arginine 2040, serine 2043 to arginine 2046, serine 2055 to arginine 2058, serine 2067 to arginine 2070, serine 2073 to lysine 2076, serine 2090 to arginine 2093, serine 2096 to arginine 2099, serine 2102 to lysine 2105, serine 2114 to arginine 2117, and serine 2129 to arginine 2132. Positions serine 2037–arginine 2132 are 10 X 4 AA tandem repeats of S-P-[RGMKC]-[RK]. Residues proline 2062–serine 2085 show a composition bias toward basic and acidic residues. At serine 2102 the chain carries Phosphoserine. A compositionally biased stretch (basic and acidic residues) spans isoleucine 2107–arginine 2116. 3 disordered regions span residues proline 2226–glycine 2252, lysine 2268–asparagine 2309, and serine 2352–histidine 2430. Positions proline 2271–leucine 2289 are enriched in low complexity. 2 positions are modified to phosphoserine: serine 2281 and serine 2285. A compositionally biased stretch (polar residues) spans lysine 2291 to serine 2301. Residues proline 2371–threonine 2380 show a composition bias toward basic and acidic residues. Positions phenylalanine 2406–glutamate 2417 are enriched in polar residues. Phosphoserine is present on residues serine 2413 and serine 2415.

Interacts with TCF4. As to expression, expressed in heart, lung, skeletal muscle and liver. In the brain expressed in cerebral cortex, hippocampus, corpora amygdala and cerebellar cortex.

The protein resides in the nucleus. Specifically binds to the DNA sequence 5'-GGGACTTTCC-3' which is found in the enhancer elements of numerous viral promoters such as those of SV40, CMV, or HIV1. In addition, related sequences are found in the enhancer elements of a number of cellular promoters, including those of the class I MHC, interleukin-2 receptor, somatostatin receptor II, and interferon-beta genes. It may act in T-cell activation. The polypeptide is Transcription factor HIVEP2 (Hivep2) (Mus musculus (Mouse)).